The sequence spans 202 residues: Outer-membrane lipoprotein carrier protein (202 aa).

Residues 1-20 form the signal peptide; it reads MKKQLLIGSVLLVASSQVWA.

The protein belongs to the LolA family. As to quaternary structure, monomer.

It localises to the periplasm. Its function is as follows. Participates in the translocation of lipoproteins from the inner membrane to the outer membrane. Only forms a complex with a lipoprotein if the residue after the N-terminal Cys is not an aspartate (The Asp acts as a targeting signal to indicate that the lipoprotein should stay in the inner membrane). In Aeromonas salmonicida (strain A449), this protein is Outer-membrane lipoprotein carrier protein.